The following is a 440-amino-acid chain: Ferredoxin--NADP reductase (440 aa).

Residues 17-75 (SRVFVYEVVGMRQNEETDQTNYPIRKSGSVFIRVPYNRMNQEMQRITRLGGKIVSIQTV) form the CpcD-like domain. The disordered stretch occupies residues 98 to 142 (AKSEGNGKATPVKTDSGAKGFAKPPAEEQLKKKDNKGNTMTQAKA). Positions 122-133 (PAEEQLKKKDNK) are enriched in basic and acidic residues. Residues 155–279 (NAPFIGKVIS…TGPVGKEMLL (125 aa)) enclose the FAD-binding FR-type domain. Residues 214 to 217 (RLYS), 235 to 237 (CVR), tyrosine 241, 253 to 255 (VCS), and threonine 294 each bind FAD. The NADP(+) site is built by serine 217 and arginine 237. NADP(+) is bound by residues threonine 294, 330–331 (VP), 360–361 (SR), 370–374 (RMYIQ), 399–400 (GL), and glutamate 438.

This sequence belongs to the ferredoxin--NADP reductase type 1 family. FAD is required as a cofactor.

The protein resides in the cellular thylakoid membrane. The enzyme catalyses 2 reduced [2Fe-2S]-[ferredoxin] + NADP(+) + H(+) = 2 oxidized [2Fe-2S]-[ferredoxin] + NADPH. The sequence is that of Ferredoxin--NADP reductase (petH) from Nostoc sp. (strain PCC 7120 / SAG 25.82 / UTEX 2576).